Here is a 122-residue protein sequence, read N- to C-terminus: Fluoride-specific ion channel FluC (122 aa).

A run of 4 helical transmembrane segments spans residues 4–24, 34–54, 66–86, and 95–115; these read LLIALGGGTGSLARYLLGTAI, IGTMVVNVSGCFAIGLAMTLL, LALVVGFLGGYTTFSSFEWET, and FWIGLANVLGSVTLGYAAVWF. Residues glycine 74 and threonine 77 each contribute to the Na(+) site.

It belongs to the fluoride channel Fluc/FEX (TC 1.A.43) family.

Its subcellular location is the cell inner membrane. The catalysed reaction is fluoride(in) = fluoride(out). With respect to regulation, na(+) is not transported, but it plays an essential structural role and its presence is essential for fluoride channel function. Fluoride-specific ion channel. Important for reducing fluoride concentration in the cell, thus reducing its toxicity. This Solibacter usitatus (strain Ellin6076) protein is Fluoride-specific ion channel FluC.